The primary structure comprises 342 residues: Elongation factor Ts (342 aa).

An involved in Mg(2+) ion dislocation from EF-Tu region spans residues threonine 80–valine 83.

Belongs to the EF-Ts family.

It localises to the cytoplasm. Functionally, associates with the EF-Tu.GDP complex and induces the exchange of GDP to GTP. It remains bound to the aminoacyl-tRNA.EF-Tu.GTP complex up to the GTP hydrolysis stage on the ribosome. The polypeptide is Elongation factor Ts (Lactobacillus delbrueckii subsp. bulgaricus (strain ATCC 11842 / DSM 20081 / BCRC 10696 / JCM 1002 / NBRC 13953 / NCIMB 11778 / NCTC 12712 / WDCM 00102 / Lb 14)).